A 349-amino-acid polypeptide reads, in one-letter code: Quinone oxidoreductase-like protein 1 (349 aa).

Belongs to the zinc-containing alcohol dehydrogenase family. Quinone oxidoreductase subfamily. In terms of assembly, homodimer. Component of the FERRY complex composed of five subunits, TBCK, PPP1R21, FERRY3, CRYZL1 and GATD1 with a ratio of 1:2:1:2:4, respectively. As to expression, ubiquitous.

The protein localises to the early endosome. Its function is as follows. Component of the FERRY complex (Five-subunit Endosomal Rab5 and RNA/ribosome intermediary). The FERRY complex directly interacts with mRNAs and RAB5A, and functions as a RAB5A effector involved in the localization and the distribution of specific mRNAs most likely by mediating their endosomal transport. The complex recruits mRNAs and ribosomes to early endosomes through direct mRNA-interaction. The chain is Quinone oxidoreductase-like protein 1 (CRYZL1) from Homo sapiens (Human).